We begin with the raw amino-acid sequence, 507 residues long: ATP synthase subunit alpha, chloroplastic (507 aa).

170-177 contributes to the ATP binding site; sequence GDRQTGKT. Phosphothreonine is present on T257.

The protein belongs to the ATPase alpha/beta chains family. F-type ATPases have 2 components, CF(1) - the catalytic core - and CF(0) - the membrane proton channel. CF(1) has five subunits: alpha(3), beta(3), gamma(1), delta(1), epsilon(1). CF(0) has four main subunits: a, b, b' and c.

The protein localises to the plastid. The protein resides in the chloroplast thylakoid membrane. The catalysed reaction is ATP + H2O + 4 H(+)(in) = ADP + phosphate + 5 H(+)(out). Functionally, produces ATP from ADP in the presence of a proton gradient across the membrane. The alpha chain is a regulatory subunit. This Arabis hirsuta (Hairy rock-cress) protein is ATP synthase subunit alpha, chloroplastic.